Here is a 259-residue protein sequence, read N- to C-terminus: Carbonic anhydrase 1 (259 aa).

N-acetylalanine is present on alanine 1. Residues 2–258 form the Alpha-carbonic anhydrase domain; the sequence is HAWGYGPTDG…LKGRHVRASF (257 aa). The Proton donor/acceptor role is filled by histidine 63. Zn(2+) contacts are provided by histidine 93, histidine 95, and histidine 118. Residues threonine 197 and 197 to 198 each bind substrate; that span reads TT.

This sequence belongs to the alpha-carbonic anhydrase family. Zn(2+) is required as a cofactor.

It is found in the cytoplasm. It carries out the reaction hydrogencarbonate + H(+) = CO2 + H2O. In terms of biological role, catalyzes the reversible hydration of carbon dioxide. In Chionodraco hamatus (Antarctic teleost icefish), this protein is Carbonic anhydrase 1 (ca1).